We begin with the raw amino-acid sequence, 126 residues long: Small ribosomal subunit protein uS8 (126 aa).

It belongs to the universal ribosomal protein uS8 family. As to quaternary structure, part of the 30S ribosomal subunit. Contacts proteins S5 and S12.

One of the primary rRNA binding proteins, it binds directly to 16S rRNA central domain where it helps coordinate assembly of the platform of the 30S subunit. The polypeptide is Small ribosomal subunit protein uS8 (Lawsonia intracellularis (strain PHE/MN1-00)).